Consider the following 301-residue polypeptide: Protoheme IX farnesyltransferase (301 aa).

Helical transmembrane passes span 20-42 (FTELVKIGIVNSNTITAFTGMWL), 55-75 (VDVIFFTIVGSALIVAASGAF), 105-125 (ALMVALVLGVVGTIMLFMTTW), 126-146 (QAGVLGVIGVFLYVVVYSLYA), 150-172 (LVSNTVIGSFSGAVPPLIGWFAV), 176-198 (FSIVPIMLFLVMFCWQPPHFYAI), 227-247 (MFFWVILLTVLPFFMFDLGLV), 249-269 (VILATLLNIGWLALSIYGFKM), and 280-300 (FVYSLNYMTILFVAMVVISIF).

This sequence belongs to the UbiA prenyltransferase family. Protoheme IX farnesyltransferase subfamily. As to quaternary structure, interacts with CtaA.

Its subcellular location is the cell membrane. It carries out the reaction heme b + (2E,6E)-farnesyl diphosphate + H2O = Fe(II)-heme o + diphosphate. The protein operates within porphyrin-containing compound metabolism; heme O biosynthesis; heme O from protoheme: step 1/1. In terms of biological role, converts heme B (protoheme IX) to heme O by substitution of the vinyl group on carbon 2 of heme B porphyrin ring with a hydroxyethyl farnesyl side group. In Listeria innocua serovar 6a (strain ATCC BAA-680 / CLIP 11262), this protein is Protoheme IX farnesyltransferase.